A 257-amino-acid chain; its full sequence is Phosphonates import ATP-binding protein PhnC (257 aa).

The ABC transporter domain maps to 4–248 (IEFKNVSKVY…IFSEIYGRTI (245 aa)). ATP is bound at residue 37 to 44 (GLSGAGKS).

It belongs to the ABC transporter superfamily. Phosphonates importer (TC 3.A.1.9.1) family. In terms of assembly, the complex is composed of two ATP-binding proteins (PhnC), two transmembrane proteins (PhnE) and a solute-binding protein (PhnD).

It is found in the cell membrane. It carries out the reaction phosphonate(out) + ATP + H2O = phosphonate(in) + ADP + phosphate + H(+). Part of the ABC transporter complex PhnCDE involved in phosphonates import. Responsible for energy coupling to the transport system. This Staphylococcus aureus (strain bovine RF122 / ET3-1) protein is Phosphonates import ATP-binding protein PhnC.